The following is a 294-amino-acid chain: Transcription repressor OFP14 (294 aa).

The span at 49 to 60 shows a compositional bias: basic residues; it reads SFKHRRRSSKTR. Disordered regions lie at residues 49 to 72, 96 to 129, and 141 to 185; these read SFKH…HQDS, DDQE…DDDD, and AVYD…SRST. Composition is skewed to basic and acidic residues over residues 61–72 and 96–117; these read FSKEEPVYHQDS and DDQE…RESS. A compositionally biased stretch (acidic residues) spans 118–128; that stretch reads SDDSDDDDDDD. A compositionally biased stretch (low complexity) spans 164-185; it reads SSEGRPSMETTSTSSERQSRST. Residues 195 to 259 enclose the OVATE domain; it reads VLRYTDEPQE…LSAFVDLIIA (65 aa).

In terms of assembly, interacts with KNAT2 and KNAT3. In terms of tissue distribution, expressed in roots, rosette and cauline leaves, shoots, stems, flower buds and siliques.

It is found in the nucleus. Its function is as follows. Transcriptional repressor that may regulate multiple aspects of plant growth and development through the regulation of BEL1-LIKE (BLH) and KNOX TALE (KNAT) homeodomain transcription factors. The polypeptide is Transcription repressor OFP14 (OFP14) (Arabidopsis thaliana (Mouse-ear cress)).